A 126-amino-acid chain; its full sequence is Fluoride-specific ion channel FluC (126 aa).

4 helical membrane-spanning segments follow: residues 5–25 (IAVI…FALW), 34–54 (WGTL…LAVF), 67–87 (LVIT…GEVV), and 95–115 (FGLA…LTWA). 2 residues coordinate Na(+): Gly-74 and Thr-77.

It belongs to the fluoride channel Fluc/FEX (TC 1.A.43) family.

It localises to the cell inner membrane. The catalysed reaction is fluoride(in) = fluoride(out). Na(+) is not transported, but it plays an essential structural role and its presence is essential for fluoride channel function. In terms of biological role, fluoride-specific ion channel. Important for reducing fluoride concentration in the cell, thus reducing its toxicity. The protein is Fluoride-specific ion channel FluC of Paracidovorax citrulli (strain AAC00-1) (Acidovorax citrulli).